The following is a 418-amino-acid chain: F-box protein At5g03970 (418 aa).

Residues 18-66 form the F-box domain; the sequence is STHEVLNSNDTMCEILILLPPETIYKLILVSKRWLEIIASPCFRHTYLA.

In Arabidopsis thaliana (Mouse-ear cress), this protein is F-box protein At5g03970.